We begin with the raw amino-acid sequence, 648 residues long: Replication restart protein PriA (648 aa).

The region spanning 131–297 (TILNESNKPT…KTHKYQLVTL (167 aa)) is the Helicase ATP-binding domain. 144–151 (GVTGSGKT) provides a ligand contact to ATP. Positions 240–243 (DEEH) match the DEAH box motif. Positions 358, 361, 367, 370, 385, 388, 398, and 401 each coordinate Zn(2+). In terms of domain architecture, Helicase C-terminal spans 375–548 (VLHKATKKLE…RFFTNELEIR (174 aa)).

This sequence belongs to the helicase family. PriA subfamily. Component of the replication restart primosome. Zn(2+) is required as a cofactor.

It catalyses the reaction Couples ATP hydrolysis with the unwinding of duplex DNA by translocating in the 3'-5' direction.. The catalysed reaction is ATP + H2O = ADP + phosphate + H(+). Initiates the restart of stalled replication forks, which reloads the replicative helicase on sites other than the origin of replication. Recognizes and binds to abandoned replication forks and remodels them to uncover a helicase loading site. Promotes assembly of the primosome at these replication forks. This chain is Replication restart protein PriA, found in Rickettsia prowazekii (strain Madrid E).